A 953-amino-acid chain; its full sequence is Serine-aspartate repeat-containing protein C (953 aa).

The first 50 residues, 1–50 (MNNKKTATNRKGMIPNRLNKFSIRKYSVGTASILVGTTLIFGLSGHEAKA), serve as a signal peptide directing secretion. Residues 51 to 160 (AEHTNGELNQ…AKNVSTTPKT (110 aa)) form a disordered region. A ligand binding A region region spans residues 51-495 (AEHTNGELNQ…GSSTANGDQK (445 aa)). Residues 56 to 71 (GELNQSKNETTAPSEN) are compositionally biased toward polar residues. Basic and acidic residues predominate over residues 72–83 (KTTEKVDSRQLK). Positions 84–114 (DNTQTATADQPKVTMSDSATVKETSSNMQSP) are enriched in polar residues. The span at 115-132 (QNATASQSTTQTSNVTTN) shows a compositional bias: low complexity. Polar residues predominate over residues 133-160 (DKSSTTYSNETDKSNLTQAKNVSTTPKT). 2 CNA-B domains span residues 496-606 (KYNL…YKTP) and 607-717 (KYSL…EEET). The disordered stretch occupies residues 678 to 933 (TQTGTNTTED…NNSNNGTLFG (256 aa)). Composition is skewed to acidic residues over residues 685-695 (TEDDKDADGGE) and 712-892 (YYEE…DSDS). An LPXTG sorting signal motif is present at residues 916-920 (LPETG). A compositionally biased stretch (low complexity) spans 918–933 (ETGSENNNSNNGTLFG). Threonine 919 bears the Pentaglycyl murein peptidoglycan amidated threonine mark. Residues 920–953 (GSENNNSNNGTLFGGLFAALGSLLLFGRRKKQNK) constitute a propeptide, removed by sortase.

Belongs to the serine-aspartate repeat-containing protein (SDr) family. Homodimerizes; via N2-Domain. Interacts with host NRXN1; this interaction mediates bacterial attachment to host cells.

The protein resides in the secreted. Its subcellular location is the cell wall. Its function is as follows. Cell surface-associated calcium-binding protein which plays an important role in adhesion and pathogenesis. Mediates interactions with components of the extracellular matrix such as host NRXN1 to promote bacterial adhesion. In Staphylococcus aureus (strain Mu50 / ATCC 700699), this protein is Serine-aspartate repeat-containing protein C (sdrC).